The sequence spans 156 residues: Arginine repressor (156 aa).

The protein belongs to the ArgR family.

The protein resides in the cytoplasm. It functions in the pathway amino-acid biosynthesis; L-arginine biosynthesis [regulation]. In terms of biological role, regulates arginine biosynthesis genes. The polypeptide is Arginine repressor (Shewanella sediminis (strain HAW-EB3)).